The primary structure comprises 398 residues: Streptopain (398 aa).

Residues 1–27 form the signal peptide; it reads MNKKKLGIRLLSLLALGGFVLANPVFA. Positions 28–145 are excised as a propeptide; that stretch reads DQNFARNEKE…TTYAGTAEIK (118 aa). Catalysis depends on Cys192, which acts as the Nucleophile. A Cysteine methyl disulfide; in zymogen form modification is found at Cys192. Residues Ser282 and Gly339 each contribute to the a protein site. The active-site Proton acceptor is the His340. The interval 368–390 is C-terminal active site loop; sequence RLDALNPSALGTGGGAGGFNGYQ.

This sequence belongs to the peptidase C10 family. Monomer. Post-translationally, the mature protease is derived from the precursor sequence by cleavage, either in cis via an autocatalytic mechanism, or in trans by mature SpeB or host proteases (trypsin, plasmin or subtilisin). Maturation can involve a number of protein cleavage intermediates. Mature SpeB probably plays the most important role in protein maturation in physiological conditions. In terms of processing, methylthiolation at Cys-192 of the inactive zymogen form is probably involved in the mechanism of secretion of the proteinase into the culture fluid.

Its subcellular location is the secreted. The protein resides in the host extracellular space. The protein localises to the host cytoplasm. It carries out the reaction Preferential cleavage with hydrophobic residues at P2, P1 and P1'.. With respect to regulation, synthesized as an inactive zymogen to protect the intracellular components of the bacteria from proteolytic activity during protein production. Once secreted into the extracellular milieu, cleaved into the active protease: maturation can be mediated in cis by autocatalytic cleavage, or in trans by mature SpeB or host proteases. Protease activity is strongly inhibited by zinc and copper, which prevent its maturation into an active protease: inhibition by metal ions may be required to prevent proteolysis of streptococcal proteins. Functionally, cysteine protease that acts as a key streptococcal virulence factor by cleaving host proteins involved in immune response. Triggers inflammation by mediating cleavage of host proteins, which can both promote host pathogenesis by triggering sterile inflammation and/or restrict streptococcal infection, depending on host immune statue and infection site. Cleaves host gasdermin-A (GSDMA) in epithelial cells, promoting GSDMA activation and formation of gasdermin pores, triggering pyroptosis. Pyroptosis triggers the elimination of the infected skin cell, depriving the pathogen of its protective niche, while inducing an inflammatory response. This ultimately prevents bacterial penetration of the epithelial barrier and a subsequent systemic dissemination of the pathogen. Also mediates cleavage of the cytokine precursor interleukin-1 beta (IL1B) to its mature form, resulting in inflammation and septic shock. SpeB-mediated maturation of IL1B plays a dual role depending on infection site: while IL1B inflammatory response prevents bacterial growth during invasive skin infections, it promotes streptococcal infection of the nasopharynx by disrupting colonization resistance mediated by the microbiota. Inhibits host autophagy be catalyzing cleavage and inactivation of key autophagy factors, such as CALCOCO2, NBR1 and SQSTM1. Cleaves and inhibits a number of complement factors, such as C2, C3-beta chain of C3, C4, C5 or SERPING1, thereby promoting evasion of host immunity. May also impair adaptive immunity by catalyzing cleavage and degradation of host immunoglobulins to promote immune system evasion; the relevance of this activity is however unsure in vivo. Catalyzes maturation and release of the peptide hormone bradykinin from the precursor Kininogen-1 (KNG1) to produce hypotension during septic shock. Also involved in bacterial translocation across the host epithelial barrier by mediating cleavage and degradation of host epithelial junction proteins, such as CDH1 and OCLN. Additionally, has been involved in degradation of fibronectin and vitronectin, two host extracellular matrix proteins involved in tissue integrity. Also able to catalyze cleavage and degradation of streptococcal proteins, such as C5a peptidase, EndoS or SmeZ. Degradation of streptococcal proteins is however strictly regulated to preserve integrity of other virulence factors. The protein is Streptopain (speB) of Streptococcus pyogenes serotype M28 (strain MGAS6180).